The chain runs to 772 residues: MAKKRARVAQDLSHKSKKRQRVEATGDDGEIVGIDQLDWKEVALPDRLEDAEGFFGLEEIDGVDLVRPIGNGEIKFKAARNRVKKNVANSISSNTEHEAGEWSGISDDEEPADDRVHSSKGKQTNVDKIETKEDKEKKSKKQSKKDLKLIDAEIQRKKKPAPKHDIQSGISFEALEEEVDGDEVDVSGWDPLGISAEIQTSLSKLRFAKPTPIQTACIPLIASGHDVVGKASTGSGKTLAFGIPILEYYLKNRREEPVQHNDAELSSKYPIALILSPTRELAHQLSKHITALCTNAPNINARIALLTGGLSVQKQQRVLANADIVIGTPGRLWDVISTGHGLLRKFQNIKFLVIDEADRLLSEGHFKEVEEILTALDRKEIHHKVTADSESEDDASRESPRQTLVFSATFHKGLQQKLAGKGRYFDGDLLDDKQSMEYLLKKLNFREDRPKFIDVNPVAQMAENLKEGLVECPAMEKDLYLYTLMLYHPQHRTLVFTNSISAVRRLTAFLQNLNLPALALHSSMAQKARLRSVERFSSPTADPSSILVATDVAARGLDIKGIDLIIHYHVPRTADTYVHRSGRTARASASGKSILLCAPEEIVGVARLAAKVHASSTASSSSSSSVTKRLPLHSVDLDRRVIARVRPRVALAKKITNHALAKEKLSSENDWLRSAADDLGVDYDSEEFAEQAKGKGRGRGRGGGREAREKAAGSMTKAEVATLKAQLRELLGKRINMGVSERYLTAGRVDIEALLAVGGNKTFLGQVGELDF.

2 disordered regions span residues 1-27 and 88-146; these read MAKK…ATGD and ANSI…SKKD. Residues 125-137 show a composition bias toward basic and acidic residues; it reads NVDKIETKEDKEK. A Q motif motif is present at residues 187–215; it reads SGWDPLGISAEIQTSLSKLRFAKPTPIQT. Residues 218–428 enclose the Helicase ATP-binding domain; that stretch reads IPLIASGHDV…AGKGRYFDGD (211 aa). 231–238 contacts ATP; the sequence is ASTGSGKT. The short motif at 355–358 is the DEAD box element; the sequence is DEAD. In terms of domain architecture, Helicase C-terminal spans 480 to 638; the sequence is YLYTLMLYHP…RLPLHSVDLD (159 aa). The interval 690-715 is disordered; sequence EQAKGKGRGRGRGGGREAREKAAGSM.

The protein belongs to the DEAD box helicase family. DDX24/MAK5 subfamily.

It is found in the nucleus. The protein localises to the nucleolus. The enzyme catalyses ATP + H2O = ADP + phosphate + H(+). ATP-binding RNA helicase involved in the biogenesis of 60S ribosomal subunits and is required for the normal formation of 25S and 5.8S rRNAs. The sequence is that of ATP-dependent RNA helicase MAK5 (MAK5) from Ajellomyces capsulatus (strain NAm1 / WU24) (Darling's disease fungus).